Consider the following 359-residue polypeptide: E2F transcription factor-like E2FD (359 aa).

DNA-binding regions lie at residues 13–78 and 138–217; these read RKDK…SWKG and RKER…RWLG. Disordered regions lie at residues 255-274 and 288-313; these read RNKS…QNTS and DVKN…NNIR. Residues 293-309 are compositionally biased toward polar residues; sequence ASGSSTPAGTSESNDMG.

Belongs to the E2F/DP family. In terms of assembly, monomer. No interactions with DPA or E2FA. In terms of tissue distribution, preferentially expressed in proliferating tissues. Highly expressed in young stalk and young flowers. Lower expression in young leaves and mature flowers. Detected in cotyledonary vascular tissues, the shoot apical meristem, the base of trichomes, the fully developed stomata, the central root cylinder and in the columella of lateral roots but not in the primary root tips or in the leaf epidermal cells.

The protein localises to the nucleus. Inhibitor of E2F-dependent regulation of gene expression. Binds specifically the E2 recognition site as a monomer without interacting with DP proteins. May be up-regulating E2FA and down-regulating repressors of cell cycle progression. Promotes cell proliferation and represses cell elongation. Regulated by proteolysis via a ubiquitin-proteasome pathway. This chain is E2F transcription factor-like E2FD (E2FD), found in Arabidopsis thaliana (Mouse-ear cress).